The sequence spans 101 residues: Small ribosomal subunit protein bS18c (101 aa).

This sequence belongs to the bacterial ribosomal protein bS18 family. In terms of assembly, part of the 30S ribosomal subunit.

The protein localises to the plastid. The protein resides in the chloroplast. This chain is Small ribosomal subunit protein bS18c, found in Gossypium hirsutum (Upland cotton).